We begin with the raw amino-acid sequence, 384 residues long: MSSYLFTSESVSEGHPDKIADQISDAVLDEILKQDPKARVACETYVKTGMALVGGEITTSAWVDIENLTRKVICDIGYEHSEMGFDGHSCAVLNAIGKQSADINQGVDRENPLDQGAGDQGIMFGYATNETDVLMPAAITYAHRLMEKQSEVRKSGKLAWLRPDAKSQVTLKYEDNKIVGVDAVVLSTQHSEEVSQKDLHEGVMEEIIKPVLPSEWLSKETKFFINPTGRFVIGGPMGDCGLTGRKIIVDTYGGAARHGGGAFSGKEPSKVDRSAAYAARYVAKNIVAAGLADRCEIQLSYAIGVAEPTSIMVETFGTGKVANELLVSLVREFFDLRPYGLIKMLDLIQPIYRETAAYGHFGREQFPWEKVDRAEDLRIAAGLK.

Residue His-15 participates in ATP binding. Asp-17 lines the Mg(2+) pocket. Residue Glu-43 coordinates K(+). L-methionine is bound by residues Glu-56 and Gln-99. Residues 99-109 (QSADINQGVDR) are flexible loop. Residues 164–166 (DAK), 230–231 (RF), Asp-239, 245–246 (RK), Ala-262, and Lys-266 each bind ATP. Residue Asp-239 participates in L-methionine binding. Position 270 (Lys-270) interacts with L-methionine.

Belongs to the AdoMet synthase family. In terms of assembly, homotetramer; dimer of dimers. It depends on Mg(2+) as a cofactor. K(+) is required as a cofactor.

The protein localises to the cytoplasm. The enzyme catalyses L-methionine + ATP + H2O = S-adenosyl-L-methionine + phosphate + diphosphate. It participates in amino-acid biosynthesis; S-adenosyl-L-methionine biosynthesis; S-adenosyl-L-methionine from L-methionine: step 1/1. Catalyzes the formation of S-adenosylmethionine (AdoMet) from methionine and ATP. The overall synthetic reaction is composed of two sequential steps, AdoMet formation and the subsequent tripolyphosphate hydrolysis which occurs prior to release of AdoMet from the enzyme. In Haemophilus influenzae (strain ATCC 51907 / DSM 11121 / KW20 / Rd), this protein is S-adenosylmethionine synthase.